The sequence spans 90 residues: NELL2-interacting cell ontogeny regulator 1 (90 aa).

The N-terminal stretch at 1–28 (MAPALRSLLSPRTLLLLLLSLALLGARA) is a signal peptide.

It belongs to the NICOL family. Interacts with NELL2; triggers epididymal differentiation. Interacts with cell surface receptor TFRC; the interaction mediates uptake of NICOL1 into fibroblasts. As to expression, expression is enriched in both male and female reproductive organs, including the testis, epididymis, seminal vesicles, coagulating glands, ovary and uterus, and in various non-reproductive organs such as brain, thymus and liver. In testis, expressed in both germ cells and Sertoli cells. Also expressed at low levels in the kidney. Expressed during neocortex and cerebellum development.

It localises to the secreted. Its subcellular location is the cytoplasm. The protein resides in the perinuclear region. In terms of biological role, mRNA-binding protein which interacts with a range of target mRNAs including SERPINE1, ACTA2, CCN2 and COL4A1 and may promote extracellular matrix production. Binds to the 3'-UTR of SERPINE1 mRNA and stabilizes the mRNA, possibly by competing for binding with SERBP1 and preventing SERBP1-mediated mRNA degradation. Also binds to the 3'-UTR of ACTA2. Testis-derived lumicrine factor that triggers epididymal differentiation and sperm maturation. The polypeptide is NELL2-interacting cell ontogeny regulator 1 (Mus musculus (Mouse)).